The following is a 320-amino-acid chain: Cytochrome f (320 aa).

Positions 1 to 35 (MQTRNAFSWLKKQITRSISVSLMIYILTRTSISSA) are cleaved as a signal peptide. Positions 36, 56, 59, and 60 each coordinate heme. The helical transmembrane segment at 286–306 (VQGLLFFLASVILAQIFLVLK) threads the bilayer.

It belongs to the cytochrome f family. The 4 large subunits of the cytochrome b6-f complex are cytochrome b6, subunit IV (17 kDa polypeptide, petD), cytochrome f and the Rieske protein, while the 4 small subunits are PetG, PetL, PetM and PetN. The complex functions as a dimer. Heme is required as a cofactor.

The protein resides in the plastid. It localises to the chloroplast thylakoid membrane. Its function is as follows. Component of the cytochrome b6-f complex, which mediates electron transfer between photosystem II (PSII) and photosystem I (PSI), cyclic electron flow around PSI, and state transitions. The chain is Cytochrome f from Nicotiana sylvestris (Wood tobacco).